A 214-amino-acid chain; its full sequence is MPEILKIKPTRMELLKLKRRVKLAERGHKLLKEKQDALIMEFFTIYDEALSLRRELIRKMEEAFNSLRRAQVDVGALRLKEIAIGVKPNKEIEIKTRNIMGVRVPLIEVPELKRKASERGYAFVSTTSTVDMAAEKFEEVLELAIRLAEVEESLKRLGKEIEKTKRRVNALEYIIIPRMENTIKFIEQHLDEMERENFFRLKRVKAILEARQSM.

The protein belongs to the V-ATPase D subunit family. Has multiple subunits with at least A(3), B(3), C, D, E, F, H, I and proteolipid K(x).

Its subcellular location is the cell membrane. Component of the A-type ATP synthase that produces ATP from ADP in the presence of a proton gradient across the membrane. This Pyrococcus horikoshii (strain ATCC 700860 / DSM 12428 / JCM 9974 / NBRC 100139 / OT-3) protein is A-type ATP synthase subunit D.